The following is a 249-amino-acid chain: Protein YIP5 (249 aa).

The next 5 membrane-spanning stretches (helical) occupy residues 87–107 (LYGP…SNSI), 131–151 (ASII…ILVW), 164–184 (LYGY…PFGL), 188–208 (LASH…SIVF), and 228–248 (LLFG…LIFF).

Belongs to the YIP1 family. In terms of assembly, interacts with the YIP1 family members yip1 and yip4, and several Rab GTPases. The C-terminal cysteines in the Rab GTPase ypt2 are essential for the interaction. Interacts with snx3.

It is found in the membrane. In terms of biological role, possible role in vesicle-mediated transport. May be involved in proper membrane localization of Rab GTPases. The polypeptide is Protein YIP5 (Schizosaccharomyces pombe (strain 972 / ATCC 24843) (Fission yeast)).